We begin with the raw amino-acid sequence, 129 residues long: UPF0325 protein Ent638_0703 (129 aa).

Belongs to the UPF0325 family.

The sequence is that of UPF0325 protein Ent638_0703 from Enterobacter sp. (strain 638).